The chain runs to 189 residues: Ribosome-recycling factor (189 aa).

The protein belongs to the RRF family.

The protein resides in the cytoplasm. Functionally, responsible for the release of ribosomes from messenger RNA at the termination of protein biosynthesis. May increase the efficiency of translation by recycling ribosomes from one round of translation to another. This is Ribosome-recycling factor from Salinibacter ruber (strain DSM 13855 / M31).